Here is a 240-residue protein sequence, read N- to C-terminus: Probable ATP synthase 24 kDa subunit, mitochondrial (240 aa).

The N-terminal 32 residues, 1–32, are a transit peptide targeting the mitochondrion; the sequence is MAYASRFLSRSKQLQGGLVILQQQHAIPVRAF. Composition is skewed to basic and acidic residues over residues 210–222 and 229–240; these read AVEAMESQKKKEE and PDVKSLDIRNFI. The tract at residues 210 to 240 is disordered; sequence AVEAMESQKKKEEFQDEEMPDVKSLDIRNFI.

The protein resides in the mitochondrion. It is found in the mitochondrion inner membrane. In terms of biological role, mitochondrial membrane ATP synthase (F(1)F(0) ATP synthase or Complex V) produces ATP from ADP in the presence of a proton gradient across the membrane which is generated by electron transport complexes of the respiratory chain. F-type ATPases consist of two structural domains, F(1) - containing the extramembraneous catalytic core and F(0) - containing the membrane proton channel, linked together by a central stalk and a peripheral stalk. During catalysis, ATP synthesis in the catalytic domain of F(1) is coupled via a rotary mechanism of the central stalk subunits to proton translocation. Part of the complex F(0) domain. The sequence is that of Probable ATP synthase 24 kDa subunit, mitochondrial from Arabidopsis thaliana (Mouse-ear cress).